Consider the following 368-residue polypeptide: MSFHTEPPYTHGSLPKTAVLLVNLGTPDAPTTSAVRTYLNEFLSDPRVVEIPRVIWWFILKLIILPFRSGKSAKKYAAIWSNEGSPLRVHTEKQAKLLTGYLGARGHEVRVEYAMRYGSPSVPEVLRKLKADGCDRILVLPAYPQYSGTTTASIFDAVFKHYARERNVPELRFVKHYHDHESYIRALQKSVLAHWDMAGRPDKLVMSFHGVPKRTLTLGDPYFCECHKTARLLAKELDLTEDQYVVTFQSRFGKAEWLQPYTAPTLQKLAKSGVKRVDVLCPGFTSDCLETLEEIGIEVRRDFLQAGGQDFNYIACLNENDAWIKALAQIAELHMIGWPTILSPALLEERNEEARISLAEAQRLGAQQ.

Fe cation contacts are provided by His-209 and Glu-290.

Belongs to the ferrochelatase family.

The protein resides in the cytoplasm. It catalyses the reaction heme b + 2 H(+) = protoporphyrin IX + Fe(2+). It functions in the pathway porphyrin-containing compound metabolism; protoheme biosynthesis; protoheme from protoporphyrin-IX: step 1/1. Functionally, catalyzes the ferrous insertion into protoporphyrin IX. The protein is Ferrochelatase of Herminiimonas arsenicoxydans.